Here is a 140-residue protein sequence, read N- to C-terminus: Transcription antitermination protein NusB (140 aa).

This sequence belongs to the NusB family.

Its function is as follows. Involved in transcription antitermination. Required for transcription of ribosomal RNA (rRNA) genes. Binds specifically to the boxA antiterminator sequence of the ribosomal RNA (rrn) operons. The sequence is that of Transcription antitermination protein NusB from Sorangium cellulosum (strain So ce56) (Polyangium cellulosum (strain So ce56)).